The primary structure comprises 165 residues: Transcription antitermination protein NusB (165 aa).

The protein belongs to the NusB family.

Its function is as follows. Involved in transcription antitermination. Required for transcription of ribosomal RNA (rRNA) genes. Binds specifically to the boxA antiterminator sequence of the ribosomal RNA (rrn) operons. The polypeptide is Transcription antitermination protein NusB (Rhodococcus erythropolis (strain PR4 / NBRC 100887)).